Here is a 257-residue protein sequence, read N- to C-terminus: Imidazole glycerol phosphate synthase subunit HisF (257 aa).

Residues Asp-11 and Asp-130 contribute to the active site.

This sequence belongs to the HisA/HisF family. Heterodimer of HisH and HisF.

The protein resides in the cytoplasm. It catalyses the reaction 5-[(5-phospho-1-deoxy-D-ribulos-1-ylimino)methylamino]-1-(5-phospho-beta-D-ribosyl)imidazole-4-carboxamide + L-glutamine = D-erythro-1-(imidazol-4-yl)glycerol 3-phosphate + 5-amino-1-(5-phospho-beta-D-ribosyl)imidazole-4-carboxamide + L-glutamate + H(+). Its pathway is amino-acid biosynthesis; L-histidine biosynthesis; L-histidine from 5-phospho-alpha-D-ribose 1-diphosphate: step 5/9. IGPS catalyzes the conversion of PRFAR and glutamine to IGP, AICAR and glutamate. The HisF subunit catalyzes the cyclization activity that produces IGP and AICAR from PRFAR using the ammonia provided by the HisH subunit. This is Imidazole glycerol phosphate synthase subunit HisF from Photobacterium profundum (strain SS9).